A 1366-amino-acid chain; its full sequence is Protein strawberry notch homolog 2 (1366 aa).

Disordered regions lie at residues Met1 to Leu24, Gln174 to Pro217, Ser614 to Arg640, and His1324 to Leu1366. Residues His15 to Leu24 are compositionally biased toward pro residues. Over residues Pro182–Glu194 the composition is skewed to acidic residues. The span at Ser614 to Lys637 shows a compositional bias: basic residues. A compositionally biased stretch (gly residues) spans Leu1333 to Pro1347.

It belongs to the SBNO family. As to quaternary structure, interacts with TAL1; this interaction inhibits TAL1 occupancy of the DCSTAMP promoter, leading to the activation of the DCSTAMP promoter by the transcription factor MITF. In terms of tissue distribution, detected in macrophages. IL10 regulates expression in a STAT3-dependent way.

In terms of biological role, acts as a transcriptional coregulator, that can have both coactivator and corepressor functions. Inhibits the DCSTAMP-repressive activity of TAL1, hence enhancing the access of the transcription factor MITF to the DC-STAMP promoter in osteoclast. Plays a role in bone homeostasis; required as a positive regulator in TNFSF11//RANKL-mediated osteoclast fusion via a DCSTAMP-dependent pathway. May also be required in the regulation of osteoblast differentiation. Involved in the transcriptional corepression of NF-kappaB in macrophages. Plays a role as a regulator in the pro-inflammatory cascade. This chain is Protein strawberry notch homolog 2 (SBNO2), found in Homo sapiens (Human).